Here is a 510-residue protein sequence, read N- to C-terminus: Probable cytochrome P450 517A2 (510 aa).

The chain crosses the membrane as a helical span at residues 1-21 (MRILIIIILIIIVFLVKDTIK). A heme-binding site is contributed by Cys-450.

This sequence belongs to the cytochrome P450 family. It depends on heme as a cofactor.

Its subcellular location is the membrane. This chain is Probable cytochrome P450 517A2 (cyp517A2), found in Dictyostelium discoideum (Social amoeba).